A 144-amino-acid polypeptide reads, in one-letter code: Effector EagT6 (144 aa).

Homodimer. Two dimers interact with Tse6; this interaction is crucial for Tse6 loading onto VgrG1a.

Functionally, plays an essential role in toxin Tse6 delivery to target cells and specifically in the loading of Tse6 onto VgrG1a. In Pseudomonas aeruginosa (strain ATCC 15692 / DSM 22644 / CIP 104116 / JCM 14847 / LMG 12228 / 1C / PRS 101 / PAO1), this protein is Effector EagT6.